Reading from the N-terminus, the 271-residue chain is DNA repair protein RecO (271 aa).

A compositionally biased stretch (basic and acidic residues) spans 249-264 (VRVEDSVRQDGDRDST). A disordered region spans residues 249–271 (VRVEDSVRQDGDRDSTTRTSSPA).

It belongs to the RecO family.

In terms of biological role, involved in DNA repair and RecF pathway recombination. The sequence is that of DNA repair protein RecO from Rhodococcus jostii (strain RHA1).